A 25-amino-acid polypeptide reads, in one-letter code: Omega conotoxin-CVIF (25 aa).

Disulfide bonds link Cys1–Cys16, Cys8–Cys20, and Cys15–Cys25. A Cysteine amide modification is found at Cys25.

Belongs to the conotoxin O1 superfamily. Expressed by the venom duct.

It localises to the secreted. Omega-conotoxins act at presynaptic membranes, they bind and block voltage-gated calcium channels. This toxin blocks N-type calcium channels (Cav2.2/CACNA1B). It shows a higher potency when Cav2.2/CACNA1B is only expressed with the ancillary subunit CACNB3 (IC(50)=0.1 nM) than on Cav2.2/CACNA1B expressed with the ancillary subunits CACNA2D1 and CACNB3 (IC(50)=19.9 nM). The Cav2.2/CACNA1B block by this toxin is voltage-independent, whereas the recovery from toxin block is voltage-dependent. There is a low recovery at physiological membrane potential and a high recovery with hyperpolarized potential. This indicates that the toxin has a higher affinity for Cav2.2/CACNA1B in the inactivated state. It is noteworthy that ancillary subunits beta modulate recovery from this toxin block. Cav2.2/CACNA1B expressed with the ancillary subunit CACNB2a (isoform 2a) almost recover completely from this toxin block, whereas an expression with CACNB3 exhibits relatively weak recovery. Inhibition by this toxin of excitatory synaptic transmission is reversible. In vivo, when tested on rat model of persistent pain, this toxin blocks chronic pain behavior. This is Omega conotoxin-CVIF from Conus catus (Cat cone).